Here is a 278-residue protein sequence, read N- to C-terminus: Formamidopyrimidine-DNA glycosylase (278 aa).

P2 functions as the Schiff-base intermediate with DNA in the catalytic mechanism. The Proton donor role is filled by E3. The active-site Proton donor; for beta-elimination activity is K58. DNA contacts are provided by H92 and R111. The segment at 239–273 (HVYGKKGVPCERCGTPIEKIKVAQRGTHFCPKCQI) adopts an FPG-type zinc-finger fold. R263 functions as the Proton donor; for delta-elimination activity in the catalytic mechanism.

The protein belongs to the FPG family. As to quaternary structure, monomer. Zn(2+) serves as cofactor.

The enzyme catalyses Hydrolysis of DNA containing ring-opened 7-methylguanine residues, releasing 2,6-diamino-4-hydroxy-5-(N-methyl)formamidopyrimidine.. It catalyses the reaction 2'-deoxyribonucleotide-(2'-deoxyribose 5'-phosphate)-2'-deoxyribonucleotide-DNA = a 3'-end 2'-deoxyribonucleotide-(2,3-dehydro-2,3-deoxyribose 5'-phosphate)-DNA + a 5'-end 5'-phospho-2'-deoxyribonucleoside-DNA + H(+). In terms of biological role, involved in base excision repair of DNA damaged by oxidation or by mutagenic agents. Acts as a DNA glycosylase that recognizes and removes damaged bases. Has a preference for oxidized purines, such as 7,8-dihydro-8-oxoguanine (8-oxoG). Has AP (apurinic/apyrimidinic) lyase activity and introduces nicks in the DNA strand. Cleaves the DNA backbone by beta-delta elimination to generate a single-strand break at the site of the removed base with both 3'- and 5'-phosphates. The polypeptide is Formamidopyrimidine-DNA glycosylase (Latilactobacillus sakei subsp. sakei (strain 23K) (Lactobacillus sakei subsp. sakei)).